Consider the following 207-residue polypeptide: Lipid A acyltransferase PagP (207 aa).

Residues 1-24 (MKFDLTAACTLSATLLVSSGTVFA) form the signal peptide. Catalysis depends on residues histidine 79, aspartate 122, and serine 123.

It belongs to the lipid A palmitoyltransferase family. As to quaternary structure, homodimer.

The protein resides in the cell outer membrane. It carries out the reaction a lipid A + a 1,2-diacyl-sn-glycero-3-phosphocholine = a hepta-acyl lipid A + a 2-acyl-sn-glycero-3-phosphocholine. The catalysed reaction is a lipid IVA + a 1,2-diacyl-sn-glycero-3-phosphocholine = a lipid IVB + a 2-acyl-sn-glycero-3-phosphocholine. It catalyses the reaction a lipid IIA + a 1,2-diacyl-sn-glycero-3-phosphocholine = a lipid IIB + a 2-acyl-sn-glycero-3-phosphocholine. In terms of biological role, transfers a fatty acid residue from the sn-1 position of a phospholipid to the N-linked hydroxyfatty acid chain on the proximal unit of lipid A or its precursors. The chain is Lipid A acyltransferase PagP from Photorhabdus laumondii subsp. laumondii (strain DSM 15139 / CIP 105565 / TT01) (Photorhabdus luminescens subsp. laumondii).